Here is a 305-residue protein sequence, read N- to C-terminus: HPr kinase/phosphorylase (305 aa).

Active-site residues include His-138 and Lys-159. Residue 153 to 160 (GESGIGKS) participates in ATP binding. Ser-160 lines the Mg(2+) pocket. The Proton acceptor; for phosphorylation activity. Proton donor; for dephosphorylation activity role is filled by Asp-177. Positions 201–210 (IEIRGIGILD) are important for the catalytic mechanism of both phosphorylation and dephosphorylation. A Mg(2+)-binding site is contributed by Glu-202. Arg-243 is an active-site residue. An important for the catalytic mechanism of dephosphorylation region spans residues 264-269 (PVRPGR).

Belongs to the HPrK/P family. Homohexamer. It depends on Mg(2+) as a cofactor.

It carries out the reaction [HPr protein]-L-serine + ATP = [HPr protein]-O-phospho-L-serine + ADP + H(+). The catalysed reaction is [HPr protein]-O-phospho-L-serine + phosphate + H(+) = [HPr protein]-L-serine + diphosphate. In terms of biological role, catalyzes the ATP- as well as the pyrophosphate-dependent phosphorylation of a specific serine residue in HPr, a phosphocarrier protein of the phosphoenolpyruvate-dependent sugar phosphotransferase system (PTS). HprK/P also catalyzes the pyrophosphate-producing, inorganic phosphate-dependent dephosphorylation (phosphorolysis) of seryl-phosphorylated HPr (P-Ser-HPr). The two antagonistic activities of HprK/P are regulated by several intracellular metabolites, which change their concentration in response to the absence or presence of rapidly metabolisable carbon sources (glucose, fructose, etc.) in the growth medium. Therefore, by controlling the phosphorylation state of HPr, HPrK/P is a sensor enzyme that plays a major role in the regulation of carbon metabolism and sugar transport: it mediates carbon catabolite repression (CCR), and regulates PTS-catalyzed carbohydrate uptake and inducer exclusion. In Thermoanaerobacter pseudethanolicus (strain ATCC 33223 / 39E) (Clostridium thermohydrosulfuricum), this protein is HPr kinase/phosphorylase.